We begin with the raw amino-acid sequence, 502 residues long: Sodium/proline symporter (502 aa).

13 helical membrane-spanning segments follow: residues 6–26 (PMLVTFCVYIFGMILIGFIAW), 42–62 (LGPFVTALSAGASDMSGWLLM), 68–88 (IFLSGISESWIAIGLTLGAWI), 127–147 (IISALVILLFFTIYCASGIVA), 163–183 (ALWAGAAATIIYTFIGGFLAV), 192–212 (SLMIFALILTPVMVIVGVGGF), 235–255 (FVAIISLMGWGLGYFGQPHIL), 276–296 (TWMILCLAGAVAVGFFGIAYF), 320–340 (ILFNPWIAGVLLSAILAAVMS), 371–391 (LVWVGRVMVLVVALIAIALAA), 398–418 (LGLVSYAWAGFGAAFGPVVLF), 430–450 (ALAGMIIGAVTVIVWKQYGWL), and 452–472 (LYEIIPGFIFGSLGIVIFSLL).

This sequence belongs to the sodium:solute symporter (SSF) (TC 2.A.21) family.

The protein localises to the cell inner membrane. It catalyses the reaction L-proline(in) + Na(+)(in) = L-proline(out) + Na(+)(out). Its function is as follows. Catalyzes the sodium-dependent uptake of extracellular L-proline. The chain is Sodium/proline symporter from Salmonella typhimurium (strain LT2 / SGSC1412 / ATCC 700720).